A 375-amino-acid polypeptide reads, in one-letter code: Neuropeptide Y receptor type 4 (375 aa).

Residues 1–39 are Extracellular-facing; the sequence is MNTSHFLAPLFPGSLQGKNGTNPLDSPYNFSDGCQDSAE. 3 N-linked (GlcNAc...) asparagine glycosylation sites follow: asparagine 2, asparagine 19, and asparagine 29. The helical transmembrane segment at 40–60 threads the bilayer; the sequence is LLAFIITTYSIETILGVLGNL. At 61-78 the chain is on the cytoplasmic side; it reads CLIFVTTRQKEKSNVTNL. Residues 79–99 traverse the membrane as a helical segment; it reads LIANLAFSDFLMCLICQPLTV. The Extracellular portion of the chain corresponds to 100–116; the sequence is TYTIMDYWIFGEVLCKM. Cysteine 114 and cysteine 201 form a disulfide bridge. A helical membrane pass occupies residues 117–137; the sequence is LTFIQCMSVTVSILSLVLVAL. Over 138–155 the chain is Cytoplasmic; the sequence is ERHQLIINPTGWKPSIFQ. Residues 156–176 form a helical membrane-spanning segment; it reads AYLGIVVIWFVSCFLSLPFLA. Residues 177–211 are Extracellular-facing; the sequence is NSTLNDLFHYNHSKVVEFLEDKVVCFVSWSSDHHR. A glycan (N-linked (GlcNAc...) asparagine) is linked at asparagine 187. A helical membrane pass occupies residues 212–232; the sequence is LIYTTFLLLFQYCIPLAFILV. The Cytoplasmic portion of the chain corresponds to 233-266; sequence CYIRIYQRLQRQKHVFHAHACSSRAGQMKRINSM. A helical membrane pass occupies residues 267 to 287; sequence LMTMVTAFAVLWLPLHVFNTL. Residues 288 to 301 lie on the Extracellular side of the membrane; that stretch reads EDWYQEAIPACHGN. Residues 302-322 form a helical membrane-spanning segment; the sequence is LIFLMCHLLAMASTCVNPFIY. The Cytoplasmic portion of the chain corresponds to 323–375; that stretch reads GFLNINFKKDIKALVLTCHCRSPRGESEHLPLSTVHTDLSKGSMRMGSKSNFI. Cysteine 340 is lipidated: S-palmitoyl cysteine.

The protein belongs to the G-protein coupled receptor 1 family. In terms of tissue distribution, heart, detected in small intestine.

The protein localises to the cell membrane. Functionally, g protein-coupled receptor for PPY/pancreatic polypeptide/PP that is negatively coupled to cAMP. Has much lower affinity for the NPY/neuropeptide Y and PYY/peptide YY. The polypeptide is Neuropeptide Y receptor type 4 (Npy4r) (Mus musculus (Mouse)).